Reading from the N-terminus, the 900-residue chain is Isoleucine--tRNA ligase (900 aa).

A 'HIGH' region motif is present at residues 59-69; sequence PYANGNIHMGH. Glu-550 is a binding site for L-isoleucyl-5'-AMP. Residues 591-595 carry the 'KMSKS' region motif; the sequence is KMSKS. Residue Lys-594 coordinates ATP. Cys-876, Cys-879, Cys-892, and Cys-895 together coordinate Zn(2+).

This sequence belongs to the class-I aminoacyl-tRNA synthetase family. IleS type 1 subfamily. In terms of assembly, monomer. Requires Zn(2+) as cofactor.

The protein resides in the cytoplasm. The enzyme catalyses tRNA(Ile) + L-isoleucine + ATP = L-isoleucyl-tRNA(Ile) + AMP + diphosphate. Catalyzes the attachment of isoleucine to tRNA(Ile). As IleRS can inadvertently accommodate and process structurally similar amino acids such as valine, to avoid such errors it has two additional distinct tRNA(Ile)-dependent editing activities. One activity is designated as 'pretransfer' editing and involves the hydrolysis of activated Val-AMP. The other activity is designated 'posttransfer' editing and involves deacylation of mischarged Val-tRNA(Ile). The sequence is that of Isoleucine--tRNA ligase from Onion yellows phytoplasma (strain OY-M).